Here is a 184-residue protein sequence, read N- to C-terminus: Probable RNA 2'-phosphotransferase (184 aa).

Belongs to the KptA/TPT1 family.

Functionally, removes the 2'-phosphate from RNA via an intermediate in which the phosphate is ADP-ribosylated by NAD followed by a presumed transesterification to release the RNA and generate ADP-ribose 1''-2''-cyclic phosphate (APPR&gt;P). May function as an ADP-ribosylase. The polypeptide is Probable RNA 2'-phosphotransferase (Escherichia coli O6:K15:H31 (strain 536 / UPEC)).